The chain runs to 86 residues: Translation machinery-associated protein 10 (86 aa).

Residues serine 28 and serine 79 each carry the phosphoserine modification. The tract at residues 63-86 (NKTRRGSNSQNNERRLSDLQQYHI) is disordered.

It belongs to the STF2 family. As to quaternary structure, associates with ribosomes.

Its subcellular location is the cytoplasm. It is found in the nucleus. Its function is as follows. May be involved in inhibition of the reverse ATPase reaction of mitochondrial F(1)F(0)-type ATP synthase. This chain is Translation machinery-associated protein 10, found in Saccharomyces cerevisiae (strain ATCC 204508 / S288c) (Baker's yeast).